The primary structure comprises 316 residues: Ribosomal RNA small subunit methyltransferase H (316 aa).

S-adenosyl-L-methionine-binding positions include 32–34, aspartate 52, phenylalanine 79, aspartate 106, and glutamine 113; that span reads AGH.

The protein belongs to the methyltransferase superfamily. RsmH family.

The protein localises to the cytoplasm. The enzyme catalyses cytidine(1402) in 16S rRNA + S-adenosyl-L-methionine = N(4)-methylcytidine(1402) in 16S rRNA + S-adenosyl-L-homocysteine + H(+). Functionally, specifically methylates the N4 position of cytidine in position 1402 (C1402) of 16S rRNA. The sequence is that of Ribosomal RNA small subunit methyltransferase H from Paenibacillus sp. (strain JDR-2).